The sequence spans 263 residues: uncharacterized protein (263 aa).

Residues 1 to 22 (MRYLKRVVLYRIVMVLSVFIIG) form the signal peptide. Cys-23 carries the N-palmitoyl cysteine lipid modification. The S-diacylglycerol cysteine moiety is linked to residue Cys-23.

This sequence belongs to the staphylococcal tandem lipoprotein family.

The protein resides in the cell membrane. This is an uncharacterized protein from Staphylococcus aureus (strain bovine RF122 / ET3-1).